The primary structure comprises 252 residues: MKIKMRGQDVKVFYGSKEALHGITLDIPEHQVTALIGPSGCGKSTFLRCFNRMNDTIEGAKITGLITLDGENIYESRIDVVELRARVGMVFQKPSPFPKSIFENVAYGPRIHGLVKSRAELHDVVEKSLRQAGLFEEVKDRLHEAGTSLSGGQQQRLCIARAIAVSPEVILMDEPCSALDPIATARIEELIDALRKDYTIVIVTHSMQQAARVSQYTAMFHLGHLVEVGETEVMFTSPKEQRTQDYITGRFG.

The 243-residue stretch at 5 to 247 (MRGQDVKVFY…PKEQRTQDYI (243 aa)) folds into the ABC transporter domain. Position 37 to 44 (37 to 44 (GPSGCGKS)) interacts with ATP.

It belongs to the ABC transporter superfamily. Phosphate importer (TC 3.A.1.7) family. In terms of assembly, the complex is composed of two ATP-binding proteins (PstB), two transmembrane proteins (PstC and PstA) and a solute-binding protein (PstS).

The protein resides in the cell inner membrane. It catalyses the reaction phosphate(out) + ATP + H2O = ADP + 2 phosphate(in) + H(+). Functionally, part of the ABC transporter complex PstSACB involved in phosphate import. Responsible for energy coupling to the transport system. This Bartonella henselae (strain ATCC 49882 / DSM 28221 / CCUG 30454 / Houston 1) (Rochalimaea henselae) protein is Phosphate import ATP-binding protein PstB.